Reading from the N-terminus, the 199-residue chain is dITP/XTP pyrophosphatase (199 aa).

8–13 (TSNINK) contacts substrate. Catalysis depends on Asp-68, which acts as the Proton acceptor. Asp-68 contacts Mg(2+). Residues Ser-69, 155–158 (FGYD), Lys-177, and 182–183 (HR) contribute to the substrate site.

The protein belongs to the HAM1 NTPase family. Homodimer. Mg(2+) is required as a cofactor.

The catalysed reaction is XTP + H2O = XMP + diphosphate + H(+). The enzyme catalyses dITP + H2O = dIMP + diphosphate + H(+). It catalyses the reaction ITP + H2O = IMP + diphosphate + H(+). Pyrophosphatase that catalyzes the hydrolysis of nucleoside triphosphates to their monophosphate derivatives, with a high preference for the non-canonical purine nucleotides XTP (xanthosine triphosphate), dITP (deoxyinosine triphosphate) and ITP. Seems to function as a house-cleaning enzyme that removes non-canonical purine nucleotides from the nucleotide pool, thus preventing their incorporation into DNA/RNA and avoiding chromosomal lesions. This Borrelia duttonii (strain Ly) protein is dITP/XTP pyrophosphatase.